A 352-amino-acid polypeptide reads, in one-letter code: Heat-inducible transcription repressor HrcA (352 aa).

Belongs to the HrcA family.

In terms of biological role, negative regulator of class I heat shock genes (grpE-dnaK-dnaJ and groELS operons). Prevents heat-shock induction of these operons. This is Heat-inducible transcription repressor HrcA from Chlorobium phaeobacteroides (strain BS1).